The chain runs to 298 residues: ADP/ATP translocase 3 (298 aa).

Residue methionine 1 is modified to N-acetylmethionine. The Mitochondrial intermembrane portion of the chain corresponds to 1 to 7; it reads MTEQAIS. An N-acetylthreonine; in ADP/ATP translocase 3, N-terminally processed modification is found at threonine 2. Residues 6 to 98 form a Solcar 1 repeat; the sequence is ISFAKDFLAG…FAFKDKYKQI (93 aa). The chain crosses the membrane as a helical span at residues 8 to 37; the sequence is FAKDFLAGGIAAAISKTAVAPIERVKLLLQ. The Mitochondrial matrix portion of the chain corresponds to 38 to 74; that stretch reads VQHASKQIAADKQYKGIVDCIVRIPKEQGVLSFWRGN. Lysine 52 is subject to N6,N6,N6-trimethyllysine. Residues 75 to 99 form a helical membrane-spanning segment; sequence LANVIRYFPTQALNFAFKDKYKQIF. Arginine 80 and lysine 92 together coordinate ADP. Residues 100–109 are Mitochondrial intermembrane-facing; that stretch reads LGGVDKHTQF. An N6-acetyllysine modification is found at lysine 105. Residues 110–130 form a helical membrane-spanning segment; the sequence is WRYFAGNLASGGAAGATSLCF. Solcar repeat units follow at residues 111 to 201 and 212 to 297; these read RYFA…AKGM and VSWM…LKKV. At 131-178 the chain is on the mitochondrial matrix side; sequence VYPLDFARTRLAADVGKSATEREFKGLGDCLVKITKSDGIRGLYQGFN. The helical transmembrane segment at 179 to 199 threads the bilayer; that stretch reads VSVQGIIIYRAAYFGVYGTAK. Topologically, residues 200–210 are mitochondrial intermembrane; it reads GMLPDPRNTHI. Residues 211–231 form a helical membrane-spanning segment; the sequence is VVSWMIAQTVTAVAGVFSYPF. Over 232-273 the chain is Mitochondrial matrix; sequence DTVRRRMMMQSGRKGADIMYKGTLDCWRKIFKDEGGKAFFKG. An ADP-binding site is contributed by arginine 235. Positions 235–240 are important for transport activity; the sequence is RRRMMM. The short motif at 235–240 is the Nucleotide carrier signature motif element; it reads RRRMMM. Position 268 is an N6-acetyllysine (lysine 268). Residues 274–291 traverse the membrane as a helical segment; sequence AWSNVLRGMGGAFVLVLY. The Mitochondrial intermembrane segment spans residues 292–298; that stretch reads DELKKVI.

Belongs to the mitochondrial carrier (TC 2.A.29) family. As to quaternary structure, monomer. Found in a complex with ARL2, ARL2BP and SLC25A6/ANT3. In terms of processing, trimethylated by ANTKMT at Lys-52.

Its subcellular location is the mitochondrion inner membrane. It is found in the membrane. The enzyme catalyses ADP(in) + ATP(out) = ADP(out) + ATP(in). It catalyses the reaction H(+)(in) = H(+)(out). The matrix-open state (m-state) is inhibited by the membrane-permeable bongkrekic acid (BKA). The cytoplasmic-open state (c-state) is inhibited by the membrane-impermeable toxic inhibitor carboxyatractyloside (CATR). Proton transporter activity is inhibited by ADP:ATP antiporter activity. Functionally, ADP:ATP antiporter that mediates import of ADP into the mitochondrial matrix for ATP synthesis, and export of ATP out to fuel the cell. Cycles between the cytoplasmic-open state (c-state) and the matrix-open state (m-state): operates by the alternating access mechanism with a single substrate-binding site intermittently exposed to either the cytosolic (c-state) or matrix (m-state) side of the inner mitochondrial membrane. In addition to its ADP:ATP antiporter activity, also involved in mitochondrial uncoupling and mitochondrial permeability transition pore (mPTP) activity. Plays a role in mitochondrial uncoupling by acting as a proton transporter: proton transport uncouples the proton flows via the electron transport chain and ATP synthase to reduce the efficiency of ATP production and cause mitochondrial thermogenesis. Proton transporter activity is inhibited by ADP:ATP antiporter activity, suggesting that SLC25A6/ANT3 acts as a master regulator of mitochondrial energy output by maintaining a delicate balance between ATP production (ADP:ATP antiporter activity) and thermogenesis (proton transporter activity). Proton transporter activity requires free fatty acids as cofactor, but does not transport it. Also plays a key role in mPTP opening, a non-specific pore that enables free passage of the mitochondrial membranes to solutes of up to 1.5 kDa, and which contributes to cell death. It is however unclear if SLC25A6/ANT3 constitutes a pore-forming component of mPTP or regulates it. This chain is ADP/ATP translocase 3, found in Sus scrofa (Pig).